A 249-amino-acid polypeptide reads, in one-letter code: 5-amino-6-(5-phospho-D-ribitylamino)uracil phosphatase YcsE (249 aa).

The Nucleophile role is filled by Asp16. Position 16 (Asp16) interacts with Mg(2+). Residue Met17 participates in phosphate binding. Residue Asp18 participates in Mg(2+) binding. Residues 50-51 and Lys177 each bind phosphate; that span reads TG. Residues Asp200 and Ser201 each coordinate Mg(2+). Asn203 is a binding site for phosphate.

Belongs to the HAD-like hydrolase superfamily. Cof family. It depends on Mg(2+) as a cofactor.

The enzyme catalyses 5-amino-6-(5-phospho-D-ribitylamino)uracil + H2O = 5-amino-6-(D-ribitylamino)uracil + phosphate. It functions in the pathway cofactor biosynthesis; riboflavin biosynthesis; 5-amino-6-(D-ribitylamino)uracil from GTP: step 4/4. In terms of biological role, catalyzes the dephosphorylation of the riboflavin precursor 5-amino-6-(5-phospho-D-ribitylamino)uracil and of flavin mononucleotide (FMN) in vitro. To a lesser extent, may also catalyze the dephosphorylation of a broad range of substrates such as phosphorylated sugars and triphosphate nucleotides in vitro. The sequence is that of 5-amino-6-(5-phospho-D-ribitylamino)uracil phosphatase YcsE (ycsE) from Bacillus subtilis (strain 168).